A 211-amino-acid polypeptide reads, in one-letter code: Uracil phosphoribosyltransferase (211 aa).

Residues R78, R103, and 130-138 each bind 5-phospho-alpha-D-ribose 1-diphosphate; that span reads DPMLATGGT. Uracil-binding positions include I195 and 200 to 202; that span reads GDA. A 5-phospho-alpha-D-ribose 1-diphosphate-binding site is contributed by D201.

It belongs to the UPRTase family. It depends on Mg(2+) as a cofactor.

The catalysed reaction is UMP + diphosphate = 5-phospho-alpha-D-ribose 1-diphosphate + uracil. Its pathway is pyrimidine metabolism; UMP biosynthesis via salvage pathway; UMP from uracil: step 1/1. With respect to regulation, allosterically activated by GTP. Catalyzes the conversion of uracil and 5-phospho-alpha-D-ribose 1-diphosphate (PRPP) to UMP and diphosphate. The chain is Uracil phosphoribosyltransferase from Streptomyces avermitilis (strain ATCC 31267 / DSM 46492 / JCM 5070 / NBRC 14893 / NCIMB 12804 / NRRL 8165 / MA-4680).